We begin with the raw amino-acid sequence, 525 residues long: Bifunctional purine biosynthesis protein PurH (525 aa).

Positions 1-149 (MSDPVIKRAL…KNNESVTVVT (149 aa)) constitute an MGS-like domain.

It belongs to the PurH family.

It catalyses the reaction (6R)-10-formyltetrahydrofolate + 5-amino-1-(5-phospho-beta-D-ribosyl)imidazole-4-carboxamide = 5-formamido-1-(5-phospho-D-ribosyl)imidazole-4-carboxamide + (6S)-5,6,7,8-tetrahydrofolate. The enzyme catalyses IMP + H2O = 5-formamido-1-(5-phospho-D-ribosyl)imidazole-4-carboxamide. It participates in purine metabolism; IMP biosynthesis via de novo pathway; 5-formamido-1-(5-phospho-D-ribosyl)imidazole-4-carboxamide from 5-amino-1-(5-phospho-D-ribosyl)imidazole-4-carboxamide (10-formyl THF route): step 1/1. It functions in the pathway purine metabolism; IMP biosynthesis via de novo pathway; IMP from 5-formamido-1-(5-phospho-D-ribosyl)imidazole-4-carboxamide: step 1/1. The sequence is that of Bifunctional purine biosynthesis protein PurH from Pelodictyon phaeoclathratiforme (strain DSM 5477 / BU-1).